The sequence spans 300 residues: Taste receptor type 2 member 105 (300 aa).

Residues 1–7 are Extracellular-facing; sequence MLSAAEG. Residues 8-28 traverse the membrane as a helical segment; it reads ILLSIATVEAGLGVLGNTFIA. Topologically, residues 29–43 are cytoplasmic; sequence LVNCMDWAKNNKLSM. The helical transmembrane segment at 44 to 64 threads the bilayer; sequence TGFLLIGLATSRIFIVWLLTL. Topologically, residues 65–87 are extracellular; sequence DAYAKLFYPSKYFSSSLIEIISY. A helical membrane pass occupies residues 88–108; the sequence is IWMTVNHLTVWFATSLSIFYF. At 109-128 the chain is on the cytoplasmic side; it reads LKIANFSDCVFLWLKRRTDK. A helical transmembrane segment spans residues 129–149; it reads AFVFLLGCLLTSWVISFSFVV. At 150-181 the chain is on the extracellular side; the sequence is KVMKDGKVNHRNRTSEMYWEKRQFTINYVFLN. The N-linked (GlcNAc...) asparagine glycan is linked to Asn161. A helical membrane pass occupies residues 182 to 202; the sequence is IGVISLFMMTLTACFLLIMSL. The Cytoplasmic portion of the chain corresponds to 203-233; the sequence is WRHSRQMQSGVSGFRDLNTEAHVKAIKFLIS. The chain crosses the membrane as a helical span at residues 234-254; it reads FIILFVLYFIGVSIEIICIFI. Residues 255-259 are Extracellular-facing; the sequence is PENKL. A helical membrane pass occupies residues 260–280; it reads LFIFGFTTASIYPCCHSFILI. Topologically, residues 281–300 are cytoplasmic; it reads LSNSQLKQAFVKVLQGLKFF.

It belongs to the G-protein coupled receptor T2R family. Expressed in subsets of taste receptor cells of the tongue and palate epithelium and exclusively in gustducin-positive cells. Expressed in gastric and duodenal tissues.

It localises to the membrane. Functionally, gustducin-coupled cycloheximide receptor implicated in the perception of bitter compounds in the oral cavity and the gastrointestinal tract. Signals through PLCB2 and the calcium-regulated cation channel TRPM5. The protein is Taste receptor type 2 member 105 (Tas2r105) of Mus musculus (Mouse).